A 305-amino-acid polypeptide reads, in one-letter code: Large ribosomal subunit protein uL3c (305 aa).

The transit peptide at 1–84 (MAAILPTFSI…AVGGLEIKMM (84 aa)) directs the protein to the chloroplast. The interval 228-256 (SHRALGSIGAGTTPGHVYKGKKMPGRMGG) is disordered.

In terms of assembly, component of the chloroplast large ribosomal subunit (LSU). Mature 70S chloroplast ribosomes of higher plants consist of a small (30S) and a large (50S) subunit. The 30S small subunit contains 1 molecule of ribosomal RNA (16S rRNA) and 24 different proteins. The 50S large subunit contains 3 rRNA molecules (23S, 5S and 4.5S rRNA) and 33 different proteins.

It localises to the plastid. The protein resides in the chloroplast. Its function is as follows. Component of the chloroplast ribosome (chloro-ribosome), a dedicated translation machinery responsible for the synthesis of chloroplast genome-encoded proteins, including proteins of the transcription and translation machinery and components of the photosynthetic apparatus. In Spinacia oleracea (Spinach), this protein is Large ribosomal subunit protein uL3c (RPL3).